The sequence spans 233 residues: C-type lectin domain family 2 member D5 (233 aa).

The disordered stretch occupies residues 1 to 52 (MPSSAHLQDPPPLLSRTLTQNEGQTSLRQSSSCGPSAASASESLSGSTESRI). Topologically, residues 1–76 (MPSSAHLQDP…PLEYPAGLYC (76 aa)) are cytoplasmic. Over residues 16–29 (RTLTQNEGQTSLRQ) the composition is skewed to polar residues. Residues 30 to 50 (SSSCGPSAASASESLSGSTES) show a composition bias toward low complexity. The chain crosses the membrane as a helical; Signal-anchor for type II membrane protein span at residues 77–97 (CYVVIIVLSVAVVALSVALSV). Residues 98-233 (KKTAQISTIN…KPNSYTSQCL (136 aa)) are Extracellular-facing. The region spanning 119–228 (VGNKCFYFNE…KSICRKPNSY (110 aa)) is the C-type lectin domain. N132 is a glycosylation site (N-linked (GlcNAc...) asparagine).

Its subcellular location is the cell membrane. Functionally, lectin-type cell surface receptor. This is C-type lectin domain family 2 member D5 (Ocil) from Rattus norvegicus (Rat).